Here is a 502-residue protein sequence, read N- to C-terminus: MAISFLCVFLITFVSLIFFAKKIKRSKWNLPPSPPKFPVIGNLHQIGELPHRSLQHLAERYGPVMLLHFGFVPITVVSSREAAEEVLRTHDLDCCSRPKLVGTRLLSRDFKDIGFTPYGNEWKARRKFALRELFCLKKVQSFRHIREEECNFLVKQLSESAVDRSPVDLSKSLFWLTASILFRVALGQNFHESDFIDKEKIEELVFEAETALASFTCSDFFPVAGLGWLVDWFSGQHKRLNDVFYKLDALFQHVIDDHLNPGRSKEHEDIIDSMLDVIHKQGEDSSLELTIDHIKGFLANIFLAGIDTGAITMIWAVTELVKNPKLIKKVQGDIREQLGSNKERITEEDIEKVPYLKMVIKETFRLHPAAPLILPRETMAHIKVQGYDIPPKRRILVNVSAIGRDPKLWTNPKEFDPERFMDSFVDYRGQHYELLPFGSGRRICPGMPMGIAAVELGLLNLLYFFDWKLPDGMTHKDIDTEEAGTLTIVKKVPLKLVPVRVQ.

The chain crosses the membrane as a helical span at residues 1–21 (MAISFLCVFLITFVSLIFFAK). Cys444 contributes to the heme binding site.

It belongs to the cytochrome P450 family. Requires heme as cofactor.

It is found in the membrane. The polypeptide is Cytochrome P450 71B19 (CYP71B19) (Arabidopsis thaliana (Mouse-ear cress)).